Consider the following 298-residue polypeptide: Rhodomycin D methylesterase DnrP (298 aa).

The AB hydrolase-1 domain occupies Pro-25 to Leu-277.

The protein belongs to the methyl esterase DnrP family.

The enzyme catalyses rhodomycin D + H2O = 10-carboxy-13-deoxycarminomycin + methanol + H(+). It catalyses the reaction 4-O-methylrhodomycin D + H2O = 10-carboxy-13-deoxydaunorubicin + methanol + H(+). Its pathway is antibiotic biosynthesis; daunorubicin biosynthesis. The protein operates within antibiotic biosynthesis; carminomycin biosynthesis. Functionally, involved in the biosynthesis of the anthracyclines carminomycin and daunorubicin (daunomycin) which are aromatic polyketide antibiotics that exhibit high cytotoxicity and are widely applied in the chemotherapy of a variety of cancers. Catalyzes the removal of methyl group from the carbomethoxy group of rhodomycin D (10-carbomethoxy-13-deoxycarminomycin) and 4-O-methylrhodomycin D to yield 10-carboxy-13-deoxycarminomycin and 10-carboxy-13-deoxydaunorubicin, respectively. Could be also involved in the decarboxylation of 10-carboxy-13-deoxycarminomycin and 10-carboxy-13-deoxydaunorubicin to yield 13-deoxycarminomycin and 13-deoxydaunorubicin, respectively. It seems that DnrK may influence the ability of DnrP to carry out the decarboxylation. This Streptomyces peucetius protein is Rhodomycin D methylesterase DnrP (dnrP).